The primary structure comprises 474 residues: Siroheme synthase (474 aa).

A precorrin-2 dehydrogenase /sirohydrochlorin ferrochelatase region spans residues methionine 1–leucine 203. Residues glutamate 22–isoleucine 23 and proline 43–alanine 44 each bind NAD(+). The residue at position 128 (serine 128) is a Phosphoserine. Positions glycine 216 to alanine 474 are uroporphyrinogen-III C-methyltransferase. Proline 225 is a binding site for S-adenosyl-L-methionine. The active-site Proton acceptor is aspartate 248. Residue lysine 270 is the Proton donor of the active site. Residues glycine 302–aspartate 304, isoleucine 307, threonine 332–alanine 333, methionine 384, and glycine 413 each bind S-adenosyl-L-methionine.

The protein in the N-terminal section; belongs to the precorrin-2 dehydrogenase / sirohydrochlorin ferrochelatase family. This sequence in the C-terminal section; belongs to the precorrin methyltransferase family.

The catalysed reaction is uroporphyrinogen III + 2 S-adenosyl-L-methionine = precorrin-2 + 2 S-adenosyl-L-homocysteine + H(+). The enzyme catalyses precorrin-2 + NAD(+) = sirohydrochlorin + NADH + 2 H(+). It catalyses the reaction siroheme + 2 H(+) = sirohydrochlorin + Fe(2+). It functions in the pathway cofactor biosynthesis; adenosylcobalamin biosynthesis; precorrin-2 from uroporphyrinogen III: step 1/1. It participates in cofactor biosynthesis; adenosylcobalamin biosynthesis; sirohydrochlorin from precorrin-2: step 1/1. The protein operates within porphyrin-containing compound metabolism; siroheme biosynthesis; precorrin-2 from uroporphyrinogen III: step 1/1. Its pathway is porphyrin-containing compound metabolism; siroheme biosynthesis; siroheme from sirohydrochlorin: step 1/1. It functions in the pathway porphyrin-containing compound metabolism; siroheme biosynthesis; sirohydrochlorin from precorrin-2: step 1/1. In terms of biological role, multifunctional enzyme that catalyzes the SAM-dependent methylations of uroporphyrinogen III at position C-2 and C-7 to form precorrin-2 via precorrin-1. Then it catalyzes the NAD-dependent ring dehydrogenation of precorrin-2 to yield sirohydrochlorin. Finally, it catalyzes the ferrochelation of sirohydrochlorin to yield siroheme. The polypeptide is Siroheme synthase (Bordetella petrii (strain ATCC BAA-461 / DSM 12804 / CCUG 43448)).